Here is a 271-residue protein sequence, read N- to C-terminus: Thioredoxin-related transmembrane protein 2 homolog (271 aa).

An N-terminal signal peptide occupies residues 1 to 28 (MTWKKQMALLAKPYYWVNILLAISYLLA). The Extracellular portion of the chain corresponds to 29–102 (KKTQFICTRL…AILWAYADFR (74 aa)). The helical transmembrane segment at 103-123 (YGLGFLLLCVLVGMVLPEPSY) threads the bilayer. The 151-residue stretch at 112–262 (VLVGMVLPEP…YKEAIERLPI (151 aa)) folds into the Thioredoxin domain. At 124 to 271 (RGPEHITYFR…IAPKEAKKVQ (148 aa)) the chain is on the cytoplasmic side. Positions 268–271 (KKVQ) match the Di-lysine motif motif.

The protein localises to the membrane. The polypeptide is Thioredoxin-related transmembrane protein 2 homolog (Drosophila melanogaster (Fruit fly)).